The chain runs to 192 residues: Dynein axonemal light chain 1 (192 aa).

LRR repeat units follow at residues 49–70 (NCERLSLSTNCIEKIANLNGLK), 71–92 (NLKILSLGRNNIKNLNGLEAVG), 94–115 (TLEELWISYNLIEKLKGIHVMK), and 116–137 (KLKVLYMSNNLVKEWGEFLKLA). Positions 150-192 (NPLEEKYSADGNWIEEATKRLPKLKKLDGNPVIKQEEETEGES) constitute an LRRCT domain.

The protein belongs to the dynein light chain LC1-type family. As to quaternary structure, interacts with DNAH5, a outer arm dynein heavy chain. Interacts with tubulin located within the A-tubule of the outer doublets in a ATP-independent manner.

It localises to the cytoplasm. The protein resides in the cytoskeleton. Its subcellular location is the cilium axoneme. Part of the multisubunit axonemal ATPase complexes that generate the force for cilia motility and govern beat frequency. Component of the outer arm dynein (ODA). May be involved in a mechanosensory feedback mechanism controlling ODA activity based on external conformational cues by tethering the outer arm dynein heavy chain (DNAH5) to the microtubule within the axoneme. This Danio rerio (Zebrafish) protein is Dynein axonemal light chain 1 (dnal1).